The sequence spans 146 residues: Ribosome-binding factor A (146 aa).

The tract at residues 113 to 146 (IRDEREAQEPAQDPAQDSSQDASVEASDAPDKAE) is disordered.

It belongs to the RbfA family. As to quaternary structure, monomer. Binds 30S ribosomal subunits, but not 50S ribosomal subunits or 70S ribosomes.

The protein localises to the cytoplasm. Its function is as follows. One of several proteins that assist in the late maturation steps of the functional core of the 30S ribosomal subunit. Associates with free 30S ribosomal subunits (but not with 30S subunits that are part of 70S ribosomes or polysomes). Required for efficient processing of 16S rRNA. May interact with the 5'-terminal helix region of 16S rRNA. This Gemmatimonas aurantiaca (strain DSM 14586 / JCM 11422 / NBRC 100505 / T-27) protein is Ribosome-binding factor A.